Here is a 64-residue protein sequence, read N- to C-terminus: Bowman-Birk type trypsin inhibitor TI1 (64 aa).

5 disulfide bridges follow: C9-C61, C10-C25, C15-C23, C32-C39, and C36-C49.

It belongs to the Bowman-Birk serine protease inhibitor family.

This is Bowman-Birk type trypsin inhibitor TI1 from Coix lacryma-jobi (Job's tears).